We begin with the raw amino-acid sequence, 466 residues long: Myocardial zonula adherens protein (466 aa).

A compositionally biased stretch (polar residues) spans 1-10; that stretch reads MLRSTSTVTL. The signal sequence occupies residues 1–20; the sequence is MLRSTSTVTLLSGGAARTPG. The segment at 1 to 23 is disordered; it reads MLRSTSTVTLLSGGAARTPGAPS. Coiled-coil stretches lie at residues 96–142 and 174–418; these read QLKE…SHAQ and LQKT…TQAK. The Required for DYNLL1-binding signature appears at 424–425; the sequence is RE.

This sequence belongs to the MYZAP family. As to quaternary structure, interacts with DSP, MPRIP and TJP1/ZO1. Interaction with MPRIP inhibits the activation of transcription factor SRF. Interacts with GRIN1. Interacts with DYNLL1. As to expression, detected in heart, liver, skeletal muscle, placenta, small intestine, lung, prostate and testis. Expressed in arrector pili muscle (at protein level).

The protein resides in the cytoplasm. The protein localises to the cytoskeleton. Its subcellular location is the cell membrane. It is found in the myofibril. It localises to the sarcomere. The protein resides in the i band. The protein localises to the z line. Its subcellular location is the cell junction. Plays a role in cellular signaling via Rho-related GTP-binding proteins and subsequent activation of transcription factor SRF. Targets TJP1 to cell junctions. In cortical neurons, may play a role in glutaminergic signal transduction through interaction with the NMDA receptor subunit GRIN1. In Homo sapiens (Human), this protein is Myocardial zonula adherens protein (MYZAP).